A 360-amino-acid chain; its full sequence is Membrane-bound lytic murein transglycosylase C (360 aa).

Residues 1–16 form the signal peptide; the sequence is MKKLLALAVIAPLLIS. A lipid anchor (N-palmitoyl cysteine) is attached at Cys17. Residue Cys17 is the site of S-diacylglycerol cysteine attachment.

This sequence belongs to the transglycosylase Slt family.

The protein localises to the cell outer membrane. It catalyses the reaction Exolytic cleavage of the (1-&gt;4)-beta-glycosidic linkage between N-acetylmuramic acid (MurNAc) and N-acetylglucosamine (GlcNAc) residues in peptidoglycan, from either the reducing or the non-reducing ends of the peptidoglycan chains, with concomitant formation of a 1,6-anhydrobond in the MurNAc residue.. Murein-degrading enzyme. May play a role in recycling of muropeptides during cell elongation and/or cell division. This chain is Membrane-bound lytic murein transglycosylase C, found in Salmonella typhi.